We begin with the raw amino-acid sequence, 215 residues long: Pyrophosphatase PpaX (215 aa).

The active-site Nucleophile is the aspartate 9.

Belongs to the HAD-like hydrolase superfamily. PpaX family. Mg(2+) is required as a cofactor.

The enzyme catalyses diphosphate + H2O = 2 phosphate + H(+). Hydrolyzes pyrophosphate formed during P-Ser-HPr dephosphorylation by HPrK/P. Might play a role in controlling the intracellular pyrophosphate pool. The chain is Pyrophosphatase PpaX from Anoxybacillus flavithermus (strain DSM 21510 / WK1).